A 169-amino-acid chain; its full sequence is Probable glutathione peroxidase 2 (169 aa).

Cys-41 is a catalytic residue.

This sequence belongs to the glutathione peroxidase family. As to quaternary structure, interacts with DJ1A. As to expression, expressed in leaves, stems, flowers, green siliques and roots.

Its subcellular location is the cytoplasm. The protein localises to the cytosol. It is found in the nucleus. The catalysed reaction is 2 glutathione + H2O2 = glutathione disulfide + 2 H2O. Functionally, may constitute a glutathione peroxidase-like protective system against oxidative stresses. In Arabidopsis thaliana (Mouse-ear cress), this protein is Probable glutathione peroxidase 2 (GPX2).